The primary structure comprises 418 residues: NADH-quinone oxidoreductase subunit D (418 aa).

Belongs to the complex I 49 kDa subunit family. In terms of assembly, NDH-1 is composed of 14 different subunits. Subunits NuoB, C, D, E, F, and G constitute the peripheral sector of the complex.

It localises to the cell inner membrane. The catalysed reaction is a quinone + NADH + 5 H(+)(in) = a quinol + NAD(+) + 4 H(+)(out). NDH-1 shuttles electrons from NADH, via FMN and iron-sulfur (Fe-S) centers, to quinones in the respiratory chain. The immediate electron acceptor for the enzyme in this species is believed to be ubiquinone. Couples the redox reaction to proton translocation (for every two electrons transferred, four hydrogen ions are translocated across the cytoplasmic membrane), and thus conserves the redox energy in a proton gradient. The protein is NADH-quinone oxidoreductase subunit D of Neisseria meningitidis serogroup C (strain 053442).